The sequence spans 780 residues: Cullin-5 (780 aa).

Ser-34 is subject to Phosphoserine. Thr-210 is subject to Phosphothreonine. The Cullin neddylation domain maps to 711–772; it reads RILRTQEAII…HRYIRRDEAD (62 aa). Lys-724 participates in a covalent cross-link: Glycyl lysine isopeptide (Lys-Gly) (interchain with G-Cter in NEDD8).

The protein belongs to the cullin family. Component of multiple cullin-5-RING E3 ubiquitin-protein ligase complexes (ECS complexes, also named CRL5 complexes) formed of CUL5, Elongin BC (ELOB and ELOC), RNF7/RBX2 and a variable SOCS box domain-containing protein as substrate-specific recognition component. CUL5-containing ECS complexes specifically contain RNF7/RBX2, and not RBX1, as catalytic subunit. Component of the ECS(ASB2) complex with the substrate recognition component ASB2. Component of the ECS(ASB6) complex with the substrate recognition component ASB6. Component of the ECS(ASB7) complex with the substrate recognition component ASB7. Component of the ECS(ASB9) complex with the substrate recognition component ASB9. Component of the ECS(ASB11) complex with the substrate recognition component ASB11. Component of the ECS(ASB12) complex with the substrate recognition component ASB12. Component of the ECS(LRRC41) complex with the substrate recognition component LRRC41. Component of the ECS(SOCS1) complex with the substrate recognition component SOCS1. Component of the ECS(SOCS2) complex with the substrate recognition component SOCS2. Component of the ECS(WSB1) complex with the substrate recognition subunit WSB1. Component of the ECS(SOCS3) complex with the substrate recognition component SOCS3. Component of the ECS(SOCS7) complex with the substrate recognition component SOCS7. Component of the ECS(SPSB1) complex with the substrate recognition component SPSB1. Component of the ECS(SPSB3) complex with the substrate recognition component SPSB3. Component of the ECS(SPSB2) complex with the substrate recognition component SPSB2. Component of the ECS(SPSB4) complex with the substrate recognition component SPSB4. Component of the ECS(RAB40) complex with the substrate recognition subunit RAB40A, RAB40B or RAB40C. Component of the ECS(KLHDC1) complex with the substrate recognition component KLHDC1. Component of the ECS(PCMTD1) complex with the substrate recognition subunit PCMTD1. May also form complexes containing RBX1 and ELOA or VHL; additional evidence is however required to confirm this result in vivo. Interacts (when neddylated) with ARIH2; leading to activate the E3 ligase activity of ARIH2. Interacts with ERCC6; the interaction is induced by DNA damaging agents or inhibitors of RNA polymerase II elongation. Interacts with ELOA (via the BC-box). Interacts (unneddylated form) with DCUN1D1, DCUN1D2, DCUN1D3, DCUN1D4 and DCUN1D5; these interactions promote the cullin neddylation. Neddylated; which enhances the ubiquitination activity of ECS complexes and prevents binding of the inhibitor CAND1. Deneddylated via its interaction with the COP9 signalosome (CSN).

The protein localises to the nucleus. The protein operates within protein modification; protein ubiquitination. In terms of biological role, core component of multiple cullin-5-RING E3 ubiquitin-protein ligase complexes (ECS complexes, also named CRL5 complexes), which mediate the ubiquitination and subsequent proteasomal degradation of target proteins. Acts a scaffold protein that contributes to catalysis through positioning of the substrate and the ubiquitin-conjugating enzyme. The functional specificity of the E3 ubiquitin-protein ligase complex depends on the variable SOCS box-containing substrate recognition component. Acts as a key regulator of neuron positioning during cortex development: component of various SOCS-containing ECS complexes, such as the ECS(SOCS7) complex, that regulate reelin signaling by mediating ubiquitination and degradation of DAB1. ECS(SOCS1) seems to direct ubiquitination of JAK2. The ECS(SOCS2) complex mediates the ubiquitination and subsequent proteasomal degradation of phosphorylated EPOR and GHR. The ECS(SPSB3) complex catalyzes ubiquitination of nuclear CGAS. ECS(KLHDC1) complex is part of the DesCEND (destruction via C-end degrons) pathway and mediates ubiquitination and degradation of truncated SELENOS selenoprotein produced by failed UGA/Sec decoding, which ends with a glycine. The ECS(ASB9) complex mediates ubiquitination and degradation of CKB. As part of some ECS complex, promotes 'Lys-11'-linked ubiquitination and degradation of BTRC. As part of a multisubunit ECS complex, polyubiquitinates monoubiquitinated POLR2A. As part of the ECS(RAB40C) complex, mediates ANKRD28 ubiquitination and degradation, thereby regulating protein phosphatase 6 (PP6) complex activity and focal adhesion assembly during cell migration. As part of the ECS(RAB40A) complex, mediates RHOU 'Lys-48'-linked ubiquitination and degradation, thus inhibiting focal adhesion disassembly during cell migration. As part of the ECS(RAB40B) complex, mediates LIMA1/EPLIN and RAP2 ubiquitination, thereby regulating actin cytoskeleton dynamics and stress fiber formation during cell migration. May form a cell surface vasopressin receptor. This Mus musculus (Mouse) protein is Cullin-5.